The sequence spans 211 residues: Thymidylate kinase (211 aa).

10–17 is a binding site for ATP; the sequence is GVEGCGKT.

It belongs to the thymidylate kinase family.

The enzyme catalyses dTMP + ATP = dTDP + ADP. Phosphorylation of dTMP to form dTDP in both de novo and salvage pathways of dTTP synthesis. The protein is Thymidylate kinase of Nostoc punctiforme (strain ATCC 29133 / PCC 73102).